A 442-amino-acid polypeptide reads, in one-letter code: UPF0597 protein HRM2_02820 (442 aa).

It belongs to the UPF0597 family.

In Desulforapulum autotrophicum (strain ATCC 43914 / DSM 3382 / VKM B-1955 / HRM2) (Desulfobacterium autotrophicum), this protein is UPF0597 protein HRM2_02820.